A 280-amino-acid polypeptide reads, in one-letter code: Phosphatidylglycerol--prolipoprotein diacylglyceryl transferase (280 aa).

A run of 3 helical transmembrane segments spans residues 19 to 39 (LSVR…YFVA), 56 to 76 (IIFY…VIFQ), and 90 to 110 (IWHG…AGVI). R138 serves as a coordination point for a 1,2-diacyl-sn-glycero-3-phospho-(1'-sn-glycerol). 2 helical membrane-spanning segments follow: residues 204–224 (LGET…FIEG) and 236–256 (IRVA…LIVY).

It belongs to the Lgt family.

The protein resides in the cell membrane. The catalysed reaction is L-cysteinyl-[prolipoprotein] + a 1,2-diacyl-sn-glycero-3-phospho-(1'-sn-glycerol) = an S-1,2-diacyl-sn-glyceryl-L-cysteinyl-[prolipoprotein] + sn-glycerol 1-phosphate + H(+). Its pathway is protein modification; lipoprotein biosynthesis (diacylglyceryl transfer). Catalyzes the transfer of the diacylglyceryl group from phosphatidylglycerol to the sulfhydryl group of the N-terminal cysteine of a prolipoprotein, the first step in the formation of mature lipoproteins. This Staphylococcus aureus (strain MRSA252) protein is Phosphatidylglycerol--prolipoprotein diacylglyceryl transferase.